The following is a 493-amino-acid chain: Glutamyl-tRNA(Gln) amidotransferase subunit A (493 aa).

Residues Lys78 and Ser158 each act as charge relay system in the active site. Ser182 (acyl-ester intermediate) is an active-site residue.

The protein belongs to the amidase family. GatA subfamily. In terms of assembly, heterotrimer of A, B and C subunits.

The enzyme catalyses L-glutamyl-tRNA(Gln) + L-glutamine + ATP + H2O = L-glutaminyl-tRNA(Gln) + L-glutamate + ADP + phosphate + H(+). Functionally, allows the formation of correctly charged Gln-tRNA(Gln) through the transamidation of misacylated Glu-tRNA(Gln) in organisms which lack glutaminyl-tRNA synthetase. The reaction takes place in the presence of glutamine and ATP through an activated gamma-phospho-Glu-tRNA(Gln). This Methylorubrum extorquens (strain CM4 / NCIMB 13688) (Methylobacterium extorquens) protein is Glutamyl-tRNA(Gln) amidotransferase subunit A.